A 246-amino-acid polypeptide reads, in one-letter code: Bis(5'-nucleosyl)-tetraphosphatase PrpE [asymmetrical] (246 aa).

Belongs to the PrpE family. Requires Ni(2+) as cofactor.

It carries out the reaction P(1),P(4)-bis(5'-guanosyl) tetraphosphate + H2O = GMP + GTP + 2 H(+). Functionally, asymmetrically hydrolyzes Ap4p to yield AMP and ATP. This is Bis(5'-nucleosyl)-tetraphosphatase PrpE [asymmetrical] from Bacillus anthracis (strain A0248).